Reading from the N-terminus, the 88-residue chain is Toxin RelE3 (88 aa).

It belongs to the RelE toxin family. In terms of assembly, forms heterodimers with RelB3 and possibly a heterotetramer RelE3-RelB3(2)-RelE3 from 2 heterodimers. The heterotetramer is probably not very stable in solution.

Functionally, toxic component of a type II toxin-antitoxin (TA) system. Has RNase activity. Is very toxic upon expression in E.coli. Its toxic activity is probably neutralized by the cognate antitoxin RelB3. The polypeptide is Toxin RelE3 (relE3) (Methanocaldococcus jannaschii (strain ATCC 43067 / DSM 2661 / JAL-1 / JCM 10045 / NBRC 100440) (Methanococcus jannaschii)).